The primary structure comprises 210 residues: 2-dehydro-3-deoxy-phosphogluconate aldolase (210 aa).

The active-site Proton acceptor is the E41. Residues R45, T69, and K129 each contribute to the pyruvate site. Residue K129 is the Schiff-base intermediate with substrate of the active site.

The protein belongs to the KHG/KDPG aldolase family. Homotrimer.

The protein localises to the cytoplasm. The catalysed reaction is 2-dehydro-3-deoxy-6-phospho-D-gluconate = D-glyceraldehyde 3-phosphate + pyruvate. It functions in the pathway carbohydrate acid metabolism; 2-dehydro-3-deoxy-D-gluconate degradation; D-glyceraldehyde 3-phosphate and pyruvate from 2-dehydro-3-deoxy-D-gluconate: step 2/2. Functionally, catalyzes the reversible, stereospecific retro-aldol cleavage of 2-keto-3-deoxy-6-phosphogluconate (KDPG) to pyruvate and D-glyceraldehyde-3-phosphate. In Treponema pallidum (strain Nichols), this protein is 2-dehydro-3-deoxy-phosphogluconate aldolase (eda).